A 259-amino-acid chain; its full sequence is 4-hydroxy-tetrahydrodipicolinate reductase (259 aa).

NAD(+) is bound by residues glycine 8–methionine 13, glycine 93–threonine 95, and alanine 119–phenylalanine 122. The active-site Proton donor/acceptor is the histidine 149. Histidine 150 lines the (S)-2,3,4,5-tetrahydrodipicolinate pocket. The Proton donor role is filled by lysine 153. Glycine 159 to threonine 160 is a binding site for (S)-2,3,4,5-tetrahydrodipicolinate.

The protein belongs to the DapB family.

The protein localises to the cytoplasm. The enzyme catalyses (S)-2,3,4,5-tetrahydrodipicolinate + NAD(+) + H2O = (2S,4S)-4-hydroxy-2,3,4,5-tetrahydrodipicolinate + NADH + H(+). It carries out the reaction (S)-2,3,4,5-tetrahydrodipicolinate + NADP(+) + H2O = (2S,4S)-4-hydroxy-2,3,4,5-tetrahydrodipicolinate + NADPH + H(+). It participates in amino-acid biosynthesis; L-lysine biosynthesis via DAP pathway; (S)-tetrahydrodipicolinate from L-aspartate: step 4/4. Functionally, catalyzes the conversion of 4-hydroxy-tetrahydrodipicolinate (HTPA) to tetrahydrodipicolinate. The chain is 4-hydroxy-tetrahydrodipicolinate reductase from Enterococcus faecalis (strain ATCC 700802 / V583).